A 289-amino-acid chain; its full sequence is Shikimate dehydrogenase (NADP(+)) (289 aa).

Shikimate is bound by residues 20–22 (SIS) and Ser-67. The Proton acceptor role is filled by Lys-71. Asp-83 provides a ligand contact to NADP(+). Asn-92 and Asp-107 together coordinate shikimate. NADP(+)-binding positions include 132 to 136 (GGGGA) and Val-230. Tyr-232 contributes to the shikimate binding site. NADP(+) is bound at residue Gly-253.

This sequence belongs to the shikimate dehydrogenase family. In terms of assembly, homodimer.

The enzyme catalyses shikimate + NADP(+) = 3-dehydroshikimate + NADPH + H(+). Its pathway is metabolic intermediate biosynthesis; chorismate biosynthesis; chorismate from D-erythrose 4-phosphate and phosphoenolpyruvate: step 4/7. Involved in the biosynthesis of the chorismate, which leads to the biosynthesis of aromatic amino acids. Catalyzes the reversible NADPH linked reduction of 3-dehydroshikimate (DHSA) to yield shikimate (SA). The protein is Shikimate dehydrogenase (NADP(+)) of Streptococcus suis (strain 98HAH33).